The following is a 349-amino-acid chain: UDP-N-acetylenolpyruvoylglucosamine reductase (349 aa).

The FAD-binding PCMH-type domain occupies 24 to 197; that stretch reads FGIDATARFA…VAVTFRLPKR (174 aa). Arg-173 is a catalytic residue. Ser-249 acts as the Proton donor in catalysis. The active site involves Glu-345.

Belongs to the MurB family. FAD is required as a cofactor.

It localises to the cytoplasm. The catalysed reaction is UDP-N-acetyl-alpha-D-muramate + NADP(+) = UDP-N-acetyl-3-O-(1-carboxyvinyl)-alpha-D-glucosamine + NADPH + H(+). It functions in the pathway cell wall biogenesis; peptidoglycan biosynthesis. Its function is as follows. Cell wall formation. In Burkholderia ambifaria (strain MC40-6), this protein is UDP-N-acetylenolpyruvoylglucosamine reductase.